A 568-amino-acid chain; its full sequence is Proton-coupled zinc antiporter SLC30A9, mitochondrial (568 aa).

The N-terminal 67 residues, 1-67, are a transit peptide targeting the mitochondrion; that stretch reads MLPGLAAAAA…IGTLSQVKLY (67 aa). The next 5 helical transmembrane spans lie at 239–259, 314–334, 342–362, 392–412, and 424–444; these read VVMVAICINGLNCFFKFLAWI, GVGIFMMGAGLSWYHGVMGLL, LLWAYCILAGSLVSEGATLLV, VILLEDTAAVLGVIIAATCMG, and SLGSLGVGTLLGMVSAFLIYT. The LXXLL motif signature appears at 462-466; it reads LTELL.

The protein belongs to the cation diffusion facilitator (CDF) transporter (TC 2.A.4) family. SLC30A subfamily. In terms of assembly, interacts with GRIP1, ESR1 and AR. Ubiquitously expressed in fetal and adult tissues and cancer cell lines.

The protein localises to the mitochondrion membrane. It localises to the nucleus. It is found in the endoplasmic reticulum. It carries out the reaction Zn(2+)(in) + 2 H(+)(out) = Zn(2+)(out) + 2 H(+)(in). In terms of biological role, mitochondrial proton-coupled zinc ion antiporter mediating the export of zinc from the mitochondria and involved in zinc homeostasis, zinc mobilization as well as mitochondrial morphology and health. In nucleus, functions as a secondary coactivator for nuclear receptors by cooperating with p160 coactivators subtypes. Plays a role in transcriptional activation of Wnt-responsive genes. This chain is Proton-coupled zinc antiporter SLC30A9, mitochondrial, found in Homo sapiens (Human).